We begin with the raw amino-acid sequence, 658 residues long: DNA-binding protein Rfx5 (658 aa).

The span at 1-10 (MAEDKPDAKS) shows a compositional bias: basic and acidic residues. The disordered stretch occupies residues 1-28 (MAEDKPDAKSPKTGARPQGGADAGEPTT). At Ala-2 the chain carries N-acetylalanine. At Ser-10 the chain carries Phosphoserine. Positions 24-89 (GEPTTLLQRL…PSLLSNEEYM (66 aa)) are N-terminal domain. A leucine-rich region; critical for dimer formation and for interaction with RFXAP region spans residues 61–65 (LYLYL). The segment at residues 91–167 (AYRWIRNHLE…YCYSGIRRKT (77 aa)) is a DNA-binding region (RFX-type winged-helix). A PxLPxI/L motif; mediates interaction with RFXANK motif is present at residues 172–177 (PPLPGL). Ser-184 is subject to Phosphoserine. Disordered stretches follow at residues 250–315 (LAEE…SSVP), 382–422 (AGPG…GLGA), 443–602 (VPPR…DKIP), and 624–658 (KGEA…ATPP). Basic and acidic residues predominate over residues 277–309 (GPKKPERPAQPPKEQEARAGTDLPGRAERKKSV). Gly residues-rich tracts occupy residues 382-398 (AGPG…GPGP) and 406-422 (PGLG…GLGA). Basic and acidic residues-rich tracts occupy residues 465–476 (PRPHDKGIKRTA) and 489–498 (PVKEMKHETQ). Residues 506–516 (KRKRGRPRKKP) show a composition bias toward basic residues. Residues 648–658 (PEHKDPKATPP) show a composition bias toward basic and acidic residues.

This sequence belongs to the RFX family. Homodimer. The RFX heterotetrameric complex consists of 2 molecules of RFX5 and one each of RFXAP and RFX-B/RFXANK; with each subunit representing a separate complementation group. Interacts (via PxLPxI/L motif) with RFXANK (via ankyrin repeats); the interaction is direct. RFX forms cooperative DNA binding complexes with X2BP and CBF/NF-Y. RFX associates with CIITA to form an active transcriptional complex. Phosphorylated.

The protein localises to the nucleus. Its function is as follows. Activates transcription from class II MHC promoters. Recognizes X-boxes. Mediates cooperative binding between RFX and NF-Y. RFX binds the X1 box of MHC-II promoters. In Mus musculus (Mouse), this protein is DNA-binding protein Rfx5 (Rfx5).